The primary structure comprises 299 residues: tRNA dimethylallyltransferase (299 aa).

ATP is bound at residue 13-20 (GATASGKT). 15–20 (TASGKT) is a binding site for substrate. Residues 38-41 (DSRQ) are interaction with substrate tRNA.

The protein belongs to the IPP transferase family. Monomer. The cofactor is Mg(2+).

It catalyses the reaction adenosine(37) in tRNA + dimethylallyl diphosphate = N(6)-dimethylallyladenosine(37) in tRNA + diphosphate. Functionally, catalyzes the transfer of a dimethylallyl group onto the adenine at position 37 in tRNAs that read codons beginning with uridine, leading to the formation of N6-(dimethylallyl)adenosine (i(6)A). The chain is tRNA dimethylallyltransferase from Prochlorococcus marinus (strain MIT 9312).